Consider the following 407-residue polypeptide: Tryptophan synthase beta chain (407 aa).

An N6-(pyridoxal phosphate)lysine modification is found at Lys98.

Belongs to the TrpB family. As to quaternary structure, tetramer of two alpha and two beta chains. Requires pyridoxal 5'-phosphate as cofactor.

The enzyme catalyses (1S,2R)-1-C-(indol-3-yl)glycerol 3-phosphate + L-serine = D-glyceraldehyde 3-phosphate + L-tryptophan + H2O. It participates in amino-acid biosynthesis; L-tryptophan biosynthesis; L-tryptophan from chorismate: step 5/5. In terms of biological role, the beta subunit is responsible for the synthesis of L-tryptophan from indole and L-serine. The sequence is that of Tryptophan synthase beta chain from Bradyrhizobium sp. (strain BTAi1 / ATCC BAA-1182).